We begin with the raw amino-acid sequence, 199 residues long: Large ribosomal subunit protein eL13A (199 aa).

Residues Thr144 and Thr152 each carry the phosphothreonine modification.

It belongs to the eukaryotic ribosomal protein eL13 family. In terms of assembly, component of the large ribosomal subunit (LSU). Mature yeast ribosomes consist of a small (40S) and a large (60S) subunit. The 40S small subunit contains 1 molecule of ribosomal RNA (18S rRNA) and 33 different proteins (encoded by 57 genes). The large 60S subunit contains 3 rRNA molecules (25S, 5.8S and 5S rRNA) and 46 different proteins (encoded by 81 genes).

Its subcellular location is the cytoplasm. In terms of biological role, component of the ribosome, a large ribonucleoprotein complex responsible for the synthesis of proteins in the cell. The small ribosomal subunit (SSU) binds messenger RNAs (mRNAs) and translates the encoded message by selecting cognate aminoacyl-transfer RNA (tRNA) molecules. The large subunit (LSU) contains the ribosomal catalytic site termed the peptidyl transferase center (PTC), which catalyzes the formation of peptide bonds, thereby polymerizing the amino acids delivered by tRNAs into a polypeptide chain. The nascent polypeptides leave the ribosome through a tunnel in the LSU and interact with protein factors that function in enzymatic processing, targeting, and the membrane insertion of nascent chains at the exit of the ribosomal tunnel. The polypeptide is Large ribosomal subunit protein eL13A (Saccharomyces cerevisiae (strain ATCC 204508 / S288c) (Baker's yeast)).